A 142-amino-acid chain; its full sequence is MAKKVQAYVKLQVAAGMANPSPPVGPALGQQGVNIMEFCKAFNAKTDSIEKGLPIPVVITVYADRSFTFVTKTPPAAVLLKKAAGIKSGSGKPNKDKVGKISRAQLQEIAQTKAADMTGADIEAMTRSIEGTARSMGLVVED.

This sequence belongs to the universal ribosomal protein uL11 family. In terms of assembly, part of the ribosomal stalk of the 50S ribosomal subunit. Interacts with L10 and the large rRNA to form the base of the stalk. L10 forms an elongated spine to which L12 dimers bind in a sequential fashion forming a multimeric L10(L12)X complex. Post-translationally, one or more lysine residues are methylated.

In terms of biological role, forms part of the ribosomal stalk which helps the ribosome interact with GTP-bound translation factors. This is Large ribosomal subunit protein uL11 from Shigella boydii serotype 18 (strain CDC 3083-94 / BS512).